The following is a 206-amino-acid chain: Eukaryotic translation initiation factor isoform 4E-2 (206 aa).

Cys103 and Cys142 are oxidised to a cystine.

This sequence belongs to the eukaryotic initiation factor 4E family. In terms of assembly, EIF4F is a multi-subunit complex, the composition of which varies with external and internal environmental conditions. It is composed of at least EIF4A, EIF4E and EIF4G. EIF4E is also known to interact with other partners. In higher plants two isoforms of EIF4F have been identified, named isoform EIF4F and isoform EIF(iso)4F. Isoform EIF4F has subunits p220 and p26, whereas isoform EIF(iso)4F has subunits p82 and p28. According to the redox status, the Cys-103-Cys-142 disulfide bridge may have a role in regulating protein function by affecting its ability to bind capped mRNA.

Functionally, recognizes and binds the 7-methylguanosine-containing mRNA cap during an early step in the initiation of protein synthesis and facilitates ribosome binding by inducing the unwinding of the mRNAs secondary structures. This Oryza sativa subsp. japonica (Rice) protein is Eukaryotic translation initiation factor isoform 4E-2.